Reading from the N-terminus, the 144-residue chain is 3-hydroxyacyl-[acyl-carrier-protein] dehydratase FabZ (144 aa).

The active site involves histidine 48.

Belongs to the thioester dehydratase family. FabZ subfamily.

Its subcellular location is the cytoplasm. The enzyme catalyses a (3R)-hydroxyacyl-[ACP] = a (2E)-enoyl-[ACP] + H2O. Functionally, involved in unsaturated fatty acids biosynthesis. Catalyzes the dehydration of short chain beta-hydroxyacyl-ACPs and long chain saturated and unsaturated beta-hydroxyacyl-ACPs. The sequence is that of 3-hydroxyacyl-[acyl-carrier-protein] dehydratase FabZ from Listeria monocytogenes serotype 4b (strain CLIP80459).